A 181-amino-acid chain; its full sequence is ADP-ribosylation factor 1 (181 aa).

Gly2 carries the N-myristoyl glycine lipid modification. An important for the stable binding to the membranes region spans residues 3-16 (LYVSRLFNRLFQKK). Residues 27-32 (AAGKTT), 126-129 (NKQD), and Ala160 contribute to the GTP site.

It belongs to the small GTPase superfamily. Arf family. May interact with GTPase RAB5b.

Its subcellular location is the golgi apparatus membrane. It carries out the reaction GTP + H2O = GDP + phosphate + H(+). Its activity is regulated as follows. Alternates between an inactive GDP-bound form and an active GTP-bound form. Intrinsic GTPase activity is almost undetectable in vitro. Activated by a guanine nucleotide-exchange factor (GEF) and inactivated by GTPase-activating protein ARFGAP1. Functionally, small GTPase involved in protein trafficking between different compartments. Modulates vesicle budding and uncoating within the Golgi complex. In its GTP-bound form, triggers the recruitment of coatomer proteins to the Golgi membrane. The hydrolysis of ARF1-bound GTP, which is mediated by ARFGAPs proteins, is required for dissociation of coat proteins from Golgi membranes and vesicles. Regulates the transport of N-acylated AK2 to the parasitophorous vacuole membrane. May be involved in the activation of lipid kinase PIP5K. The chain is ADP-ribosylation factor 1 from Plasmodium falciparum (isolate 3D7).